Here is a 501-residue protein sequence, read N- to C-terminus: Cytochrome P450 90A3 (501 aa).

The chain crosses the membrane as a helical span at residues 2–22; sequence AAAALLLLAAAAAIVVVAMVL. Position 446 (cysteine 446) interacts with heme.

This sequence belongs to the cytochrome P450 family. Heme is required as a cofactor. Highly expressed in shoot apex and inflorenscence. Expressed in roots, stems, leaf blades and leaf sheaths.

The protein localises to the membrane. It functions in the pathway plant hormone biosynthesis; brassinosteroid biosynthesis. Functionally, catalyzes the C23-alpha-hydroxylation step in brassinosteroid biosynthesis. Converts 6-deoxocathasterone (6-deoxoCT) to 6-deoxoteasterone (6-deoxoTE) in the late C6-oxidation pathway and cathasterone (CT) to teasterone (TE) in the early C6-oxidation pathway of brassinolide (BL) biosynthesis. The protein is Cytochrome P450 90A3 of Oryza sativa subsp. japonica (Rice).